We begin with the raw amino-acid sequence, 455 residues long: ATP-dependent protease ATPase subunit HslU (455 aa).

Residues I19 and 61-66 (GVGKTE) contribute to the ATP site. The interval 144–163 (ESKVGFANEPAEDAASKKEK) is disordered. Positions 268, 333, and 405 each coordinate ATP.

Belongs to the ClpX chaperone family. HslU subfamily. A double ring-shaped homohexamer of HslV is capped on each side by a ring-shaped HslU homohexamer. The assembly of the HslU/HslV complex is dependent on binding of ATP.

The protein localises to the cytoplasm. Its function is as follows. ATPase subunit of a proteasome-like degradation complex; this subunit has chaperone activity. The binding of ATP and its subsequent hydrolysis by HslU are essential for unfolding of protein substrates subsequently hydrolyzed by HslV. HslU recognizes the N-terminal part of its protein substrates and unfolds these before they are guided to HslV for hydrolysis. In Francisella tularensis subsp. holarctica (strain FTNF002-00 / FTA), this protein is ATP-dependent protease ATPase subunit HslU.